We begin with the raw amino-acid sequence, 314 residues long: Putative gluconeogenesis factor (314 aa).

This sequence belongs to the gluconeogenesis factor family.

It is found in the cytoplasm. Required for morphogenesis under gluconeogenic growth conditions. The chain is Putative gluconeogenesis factor from Thermotoga maritima (strain ATCC 43589 / DSM 3109 / JCM 10099 / NBRC 100826 / MSB8).